We begin with the raw amino-acid sequence, 651 residues long: Probable potassium transport system protein Kup (651 aa).

The segment covering 1–16 (MRDSPGSKSSSERWHD) has biased composition (basic and acidic residues). The segment at 1–31 (MRDSPGSKSSSERWHDTMAVSDPTAEGKDES) is disordered. A run of 12 helical transmembrane segments spans residues 38–58 (FWAL…TSPL), 74–94 (VTPA…FIVV), 129–149 (LLLL…SMIT), 168–188 (LQDY…AVQS), 197–217 (AFAP…VLHI), 232–252 (AIHF…LVFL), 276–296 (WFCL…ALIL), 309–329 (LAPA…TVIA), 366–386 (IYLP…VLLF), 396–416 (YGIA…VVVW), 423–443 (PAAA…FFSA), and 448–468 (LFDG…LIWT).

It belongs to the HAK/KUP transporter (TC 2.A.72) family.

It localises to the cell inner membrane. It catalyses the reaction K(+)(in) + H(+)(in) = K(+)(out) + H(+)(out). Transport of potassium into the cell. Likely operates as a K(+):H(+) symporter. This Nitrobacter winogradskyi (strain ATCC 25391 / DSM 10237 / CIP 104748 / NCIMB 11846 / Nb-255) protein is Probable potassium transport system protein Kup.